A 665-amino-acid chain; its full sequence is Potassium-transporting ATPase ATP-binding subunit (665 aa).

The next 4 helical transmembrane spans lie at 28 to 48, 56 to 76, 207 to 227, and 244 to 264; these read MFLT…PGFF, YLQF…FSSM, IALT…TASI, and IVLL…AIGI. Catalysis depends on D295, which acts as the 4-aspartylphosphate intermediate. ATP-binding positions include D332, E336, 364–371, and K382; that span reads FSSETKYS. Mg(2+)-binding residues include D501 and D505. 3 helical membrane passes run 570-590, 596-616, and 644-664; these read YFVI…VNVL, IVAV…LIPL, and VVVP…LGVV.

This sequence belongs to the cation transport ATPase (P-type) (TC 3.A.3) family. Type IA subfamily. As to quaternary structure, the system is composed of three essential subunits: KdpA, KdpB and KdpC.

The protein resides in the cell membrane. It catalyses the reaction K(+)(out) + ATP + H2O = K(+)(in) + ADP + phosphate + H(+). In terms of biological role, part of the high-affinity ATP-driven potassium transport (or Kdp) system, which catalyzes the hydrolysis of ATP coupled with the electrogenic transport of potassium into the cytoplasm. This subunit is responsible for energy coupling to the transport system and for the release of the potassium ions to the cytoplasm. This Thermoplasma acidophilum (strain ATCC 25905 / DSM 1728 / JCM 9062 / NBRC 15155 / AMRC-C165) protein is Potassium-transporting ATPase ATP-binding subunit.